A 634-amino-acid polypeptide reads, in one-letter code: RING finger protein 207 (634 aa).

Residues C25–Q64 form an RING-type zinc finger. The segment at V93–L145 adopts a B box-type; atypical zinc-finger fold. Residues C98, C101, C127, and H132 each coordinate Zn(2+). Coiled coils occupy residues E422–S457 and E494–L518. A disordered region spans residues F552 to T634.

In terms of assembly, interacts with the core-glycosylated, but not the fully glycosylated form of KCNH2/HERG. Interacts with DNAJA1 and HSPA8. Interacts (via the C-terminus) with HSPA1A; this interaction additively increases KCNH2 expression.

It localises to the cytoplasm. Plays a role in cardiac repolarization possibly by stabilizing membrane expression of the potassium channel KCNH2/HERG, or by assisting its synthesis, folding or export from the endoplasmic reticulum, in a heat shock protein-dependent manner. The protein is RING finger protein 207 (RNF207) of Homo sapiens (Human).